The chain runs to 352 residues: Protein O-mannose kinase (352 aa).

Residues 1–16 lie on the Cytoplasmic side of the membrane; sequence MERKPSVCRKSGSWNC. Residues 17–37 traverse the membrane as a helical; Signal-anchor for type II membrane protein segment; sequence LLVLFLLLLFTVVSVNFLLYM. At 38–352 the chain is on the lumenal side; it reads YIDQMYAPSR…MAVAETREML (315 aa). The 271-residue stretch at 82–352 folds into the Protein kinase domain; it reads VRKLKLVGEG…MAVAETREML (271 aa).

Belongs to the protein kinase superfamily. Ser/Thr protein kinase family. STKL subfamily.

Its subcellular location is the endoplasmic reticulum membrane. It carries out the reaction 3-O-[beta-D-GalNAc-(1-&gt;3)-beta-D-GlcNAc-(1-&gt;4)-alpha-D-Man]-L-Thr-[protein] + ATP = 3-O-[beta-D-GalNAc-(1-&gt;3)-beta-D-GlcNAc-(1-&gt;4)-(O-6-P-alpha-D-Man)]-Thr-[protein] + ADP + H(+). Functionally, protein O-mannose kinase that specifically mediates phosphorylation at the 6-position of an O-mannose of the trisaccharide (N-acetylgalactosamine (GalNAc)-beta-1,3-N-acetylglucosamine (GlcNAc)-beta-1,4-mannose) to generate phosphorylated O-mannosyl trisaccharide (N-acetylgalactosamine-beta-1,3-N-acetylglucosamine-beta-1,4-(phosphate-6-)mannose). Phosphorylated O-mannosyl trisaccharide is a carbohydrate structure present in alpha-dystroglycan (dag1), which is required for binding laminin G-like domain-containing extracellular proteins with high affinity. Only shows kinase activity when the GalNAc-beta-3-GlcNAc-beta-terminus is linked to the 4-position of O-mannose, suggesting that this disaccharide serves as the substrate recognition motif. In Xenopus laevis (African clawed frog), this protein is Protein O-mannose kinase (pomk).